Reading from the N-terminus, the 66-residue chain is Large ribosomal subunit protein bL33 (66 aa).

It belongs to the bacterial ribosomal protein bL33 family.

The protein is Large ribosomal subunit protein bL33 of Wolbachia pipientis wMel.